Consider the following 39-residue polypeptide: Photosystem II reaction center protein J (39 aa).

The helical transmembrane segment at 7–27 (IPLWIVAVVAGLGVITVVGLF) threads the bilayer.

It belongs to the PsbJ family. In terms of assembly, PSII is composed of 1 copy each of membrane proteins PsbA, PsbB, PsbC, PsbD, PsbE, PsbF, PsbH, PsbI, PsbJ, PsbK, PsbL, PsbM, PsbT, PsbX, PsbY, PsbZ, Psb30/Ycf12, peripheral proteins PsbO, CyanoQ (PsbQ), PsbU, PsbV and a large number of cofactors. It forms dimeric complexes.

It localises to the cellular thylakoid membrane. In terms of biological role, one of the components of the core complex of photosystem II (PSII). PSII is a light-driven water:plastoquinone oxidoreductase that uses light energy to abstract electrons from H(2)O, generating O(2) and a proton gradient subsequently used for ATP formation. It consists of a core antenna complex that captures photons, and an electron transfer chain that converts photonic excitation into a charge separation. The chain is Photosystem II reaction center protein J from Synechococcus sp. (strain JA-2-3B'a(2-13)) (Cyanobacteria bacterium Yellowstone B-Prime).